The chain runs to 210 residues: Ribonuclease HII (210 aa).

The RNase H type-2 domain occupies 2–203; sequence SGVMGIDEAG…YKRVESEVKQ (202 aa). 3 residues coordinate a divalent metal cation: Asp8, Glu9, and Asp99.

This sequence belongs to the RNase HII family. Requires Mn(2+) as cofactor. Mg(2+) is required as a cofactor.

The protein resides in the cytoplasm. It carries out the reaction Endonucleolytic cleavage to 5'-phosphomonoester.. Functionally, endonuclease that specifically degrades the RNA of RNA-DNA hybrids. The chain is Ribonuclease HII from Methanopyrus kandleri (strain AV19 / DSM 6324 / JCM 9639 / NBRC 100938).